A 534-amino-acid chain; its full sequence is Peptide chain release factor 3 (534 aa).

One can recognise a tr-type G domain in the interval 9–278; the sequence is SRRRTFAIIS…FFVEHAPPPQ (270 aa). GTP is bound by residues 18–25, 86–90, and 140–143; these read SHPDAGKT, DTPGH, and NKLD.

It belongs to the TRAFAC class translation factor GTPase superfamily. Classic translation factor GTPase family. PrfC subfamily.

It localises to the cytoplasm. In terms of biological role, increases the formation of ribosomal termination complexes and stimulates activities of RF-1 and RF-2. It binds guanine nucleotides and has strong preference for UGA stop codons. It may interact directly with the ribosome. The stimulation of RF-1 and RF-2 is significantly reduced by GTP and GDP, but not by GMP. This chain is Peptide chain release factor 3, found in Stenotrophomonas maltophilia (strain R551-3).